The primary structure comprises 266 residues: uncharacterized protein (266 aa).

The first 22 residues, 1–22 (MRYLKKLAWFISVIILGIFIIG), serve as a signal peptide directing secretion. A lipid anchor (N-palmitoyl cysteine) is attached at Cys-23. Cys-23 is lipidated: S-diacylglycerol cysteine.

Belongs to the staphylococcal tandem lipoprotein family.

The protein resides in the cell membrane. This is an uncharacterized protein from Staphylococcus aureus (strain USA300).